The sequence spans 68 residues: Phosphatidylinositol N-acetylglucosaminyltransferase ERI1 subunit (68 aa).

The next 2 helical transmembrane spans lie at 8–28 (FLVLGFTYSVLLISLATFYWL) and 34–54 (FLHYWCVLLLCPATLWLWALI).

As to quaternary structure, component of the phosphatidylinositol N-acetylglucosaminyltransferase (GPI-GlcNAc transferase) complex composed of at least GPI1, GPI2, GPI3, GPI15, GPI19 and ERI1. Interacts with GPI2. Interacts with GTP-bound RAS2 in an effector loop-dependent manner.

Its subcellular location is the endoplasmic reticulum membrane. It functions in the pathway glycolipid biosynthesis; glycosylphosphatidylinositol-anchor biosynthesis. Probable component of the GPI-GlcNAc transferase (GPI-GnT) complex in the endoplasmic reticulum, a complex that catalyzes transfer of GlcNAc from UDP-GlcNAc to an acceptor phosphatidylinositol, the first step in the production of GPI-anchors for cell surface proteins. Ras may inhibit the enzyme activity of the GPI-GnT complex via the association between ERI1 and RAS2. This is Phosphatidylinositol N-acetylglucosaminyltransferase ERI1 subunit (ERI1) from Saccharomyces cerevisiae (strain ATCC 204508 / S288c) (Baker's yeast).